Here is a 246-residue protein sequence, read N- to C-terminus: tRNA pseudouridine synthase C (246 aa).

Asp-58 is an active-site residue.

Belongs to the pseudouridine synthase RluA family.

The catalysed reaction is uridine(65) in tRNA = pseudouridine(65) in tRNA. In terms of biological role, responsible for synthesis of pseudouridine from uracil-65 in transfer RNAs. The chain is tRNA pseudouridine synthase C (truC) from Vibrio parahaemolyticus serotype O3:K6 (strain RIMD 2210633).